Consider the following 475-residue polypeptide: Polyphosphate:AMP phosphotransferase (475 aa).

2 PPK2 regions span residues 18–222 and 256–472; these read LDLI…LTAL and ANYK…KADR.

Belongs to the polyphosphate kinase 2 (PPK2) family. Class II subfamily. Homodimer and homotetramer. Requires Mg(2+) as cofactor.

It catalyses the reaction [phosphate](n) + ADP = [phosphate](n+1) + AMP. In terms of biological role, uses inorganic polyphosphate (polyP) as a donor to convert AMP to ADP. Can also use GMP, UMP, CMP, TMP or deoxyribonucleoside monophosphates, with lower efficiency. Cannot use low-molecular weight polyP as donors. Can also catalyze the synthesis of polyP from ADP or GDP, with lower efficiency. The protein is Polyphosphate:AMP phosphotransferase of Acinetobacter johnsonii.